A 318-amino-acid chain; its full sequence is Acyl-CoA dehydrogenase IpdE2 (318 aa).

FAD contacts are provided by Arg210 and Gly277.

This sequence belongs to the acyl-CoA dehydrogenase family. In terms of assembly, heterotetramer composed of 2 IpdE1 subunits and 2 IpdE2 subunits. The cofactor is FAD.

The enzyme catalyses 3-[(3aS,4S,5R,7aS)-5-hydroxy-7a-methyl-1-oxo-octahydro-1H-inden-4-yl]propanoyl-CoA + A = (2E)-3-[(3aS,4S,5R,7aS)-5-hydroxy-7a-methyl-1-oxo-octahydro-1H-inden-4-yl]prop-2-enoyl-CoA + AH2. Its pathway is steroid metabolism; cholesterol degradation. Its function is as follows. Involved in cholesterol degradation. Catalyzes the dehydrogenation of 5OH-HIP-CoA to 5OH-HIPE-CoA. Can also use octanoyl-CoA and dihydroferuloyl-CoA, with lower efficiency. Cannot use 3-oxo-4-pregnene-20-carboxyl-CoA (3-OPC-CoA). In Mycobacterium tuberculosis (strain ATCC 25618 / H37Rv), this protein is Acyl-CoA dehydrogenase IpdE2.